Consider the following 88-residue polypeptide: Molybdopterin synthase sulfur carrier subunit (88 aa).

At G88 the chain carries 1-thioglycine; alternate. A Glycyl adenylate; alternate modification is found at G88.

This sequence belongs to the MoaD family. MOCS2A subfamily. In terms of assembly, heterotetramer; composed of 2 small (MOCS2A) and 2 large (MOCS2B) subunits. In terms of processing, C-terminal thiocarboxylation occurs in 2 steps, it is first acyl-adenylated (-COAMP) via the hesA/moeB/thiF part of uba4, then thiocarboxylated (-COSH) via the rhodanese domain of uba4.

Its subcellular location is the cytoplasm. It participates in cofactor biosynthesis; molybdopterin biosynthesis. Functionally, acts as a sulfur carrier required for molybdopterin biosynthesis. Component of the molybdopterin synthase complex that catalyzes the conversion of precursor Z into molybdopterin by mediating the incorporation of 2 sulfur atoms into precursor Z to generate a dithiolene group. In the complex, serves as sulfur donor by being thiocarboxylated (-COSH) at its C-terminus by uba4. After interaction with MOCS2B, the sulfur is then transferred to precursor Z to form molybdopterin. The polypeptide is Molybdopterin synthase sulfur carrier subunit (Aspergillus niger (strain ATCC MYA-4892 / CBS 513.88 / FGSC A1513)).